A 107-amino-acid polypeptide reads, in one-letter code: Theromyzin (107 aa).

An N-terminal signal peptide occupies residues 1 to 21; the sequence is MHAKIILALFLGMTAFLAVQA.

Coelomic liquid (at protein level). Expressed in large fat cells in contact with coelomic cavities, in intestinal epithelia and at the epidermis level.

It localises to the secreted. Has bacteriostatic activity against M.luteus. No activity toward E.coli and F.oxysporum. The polypeptide is Theromyzin (Theromyzon tessulatum (Duck leech)).